The sequence spans 220 residues: Probable septum site-determining protein MinC (220 aa).

The protein belongs to the MinC family. As to quaternary structure, interacts with MinD and FtsZ.

In terms of biological role, cell division inhibitor that blocks the formation of polar Z ring septums. Rapidly oscillates between the poles of the cell to destabilize FtsZ filaments that have formed before they mature into polar Z rings. Prevents FtsZ polymerization. In Prochlorococcus marinus subsp. pastoris (strain CCMP1986 / NIES-2087 / MED4), this protein is Probable septum site-determining protein MinC.